The following is a 449-amino-acid chain: Phosphoglucosamine mutase (449 aa).

The active-site Phosphoserine intermediate is Ser100. Residues Ser100, Asp241, Asp243, and Asp245 each contribute to the Mg(2+) site. At Ser100 the chain carries Phosphoserine.

The protein belongs to the phosphohexose mutase family. The cofactor is Mg(2+). In terms of processing, activated by phosphorylation.

The catalysed reaction is alpha-D-glucosamine 1-phosphate = D-glucosamine 6-phosphate. Catalyzes the conversion of glucosamine-6-phosphate to glucosamine-1-phosphate. In Clostridium botulinum (strain 657 / Type Ba4), this protein is Phosphoglucosamine mutase.